Consider the following 37-residue polypeptide: uncharacterized protein (37 aa).

Residues 1–23 form the signal peptide; the sequence is MLNFSLCLYPVFILNKLVLRTQS.

The protein belongs to the orthopoxviruses VACWR204.5 protein family.

This is an uncharacterized protein from Vaccinia virus (strain Western Reserve) (VACV).